Here is a 644-residue protein sequence, read N- to C-terminus: Biosynthetic arginine decarboxylase (644 aa).

At Lys-113 the chain carries N6-(pyridoxal phosphate)lysine. 293–303 (FDVGGGLGVDY) lines the substrate pocket.

Belongs to the Orn/Lys/Arg decarboxylase class-II family. SpeA subfamily. Mg(2+) is required as a cofactor. It depends on pyridoxal 5'-phosphate as a cofactor.

The enzyme catalyses L-arginine + H(+) = agmatine + CO2. Catalyzes the biosynthesis of agmatine from arginine. This Pasteurella multocida (strain Pm70) protein is Biosynthetic arginine decarboxylase.